The following is a 636-amino-acid chain: Carbon monoxide dehydrogenase 1 (636 aa).

6 residues coordinate [4Fe-4S] cluster: Cys-38, Cys-46, Cys-47, Cys-50, Cys-55, and Cys-69. [Ni-4Fe-5S] cluster contacts are provided by His-262, Cys-297, Cys-335, Cys-448, Cys-478, and Cys-528.

This sequence belongs to the Ni-containing carbon monoxide dehydrogenase family. As to quaternary structure, homodimer. [4Fe-4S] cluster serves as cofactor. [Ni-4Fe-5S] cluster is required as a cofactor.

The protein resides in the cytoplasm. Its subcellular location is the cell membrane. It catalyses the reaction CO + 2 oxidized [2Fe-2S]-[ferredoxin] + H2O = 2 reduced [2Fe-2S]-[ferredoxin] + CO2 + 2 H(+). Its activity is regulated as follows. Inactivated by O(2). Its function is as follows. CODH oxidizes carbon monoxide coupled, via CooF, to the reduction of a hydrogen cation by a hydrogenase (possibly CooH). This chain is Carbon monoxide dehydrogenase 1 (cooS1), found in Carboxydothermus hydrogenoformans (strain ATCC BAA-161 / DSM 6008 / Z-2901).